A 592-amino-acid chain; its full sequence is AT-rich interactive domain-containing protein 5A (592 aa).

Positions 1-53 (MAPPVKGKRKQSEEGEPLDPPVSPQPDGEPRSRSPVRLEEPPEAGREREEEQE) are disordered. Positions 1-299 (MAPPVKGKRK…AAPPLESPQS (299 aa)) are interaction with SOX9. Phosphoserine is present on Ser-23. A compositionally biased stretch (basic and acidic residues) spans 28 to 49 (GEPRSRSPVRLEEPPEAGRERE). In terms of domain architecture, ARID spans 52-144 (QEEEQAFLVS…LVLPYVRHLK (93 aa)). Glycyl lysine isopeptide (Lys-Gly) (interchain with G-Cter in ubiquitin) cross-links involve residues Lys-82 and Lys-91. A disordered region spans residues 143-225 (LKGEDDKPLP…RGPAAGPSLP (83 aa)). Basic and acidic residues predominate over residues 162 to 186 (MAKEPRGDDGATERPKKVKEEKRVD). Ser-253 carries the post-translational modification Phosphoserine. The segment at 277 to 333 (CRHGAGGEPQAPPAAPPLESPQSPGGPAEDSRHRLTPLEGRQAPGGGLWGETQAGPR) is disordered. The segment covering 286-295 (QAPPAAPPLE) has biased composition (pro residues). Ser-438 and Ser-463 each carry phosphoserine.

Interacts with SOX9. Interacts with ESR1. Interacts with RORC. In terms of processing, phosphorylated by MAPK14 on serine residues involving a TLR4 signaling pathway upon lipopolysaccharide (LPS) stimulation leading to its ubiquitination and proteasomal degradation. Post-translationally, ubiquitinated leading to proteasomal degradation; involving WWP1 linked to MAPK14-mediated phosphorylation upon LPS stimulation.

It is found in the nucleus. In terms of biological role, DNA-binding protein that may regulate transcription and act as a repressor by binding to AT-rich stretches in the promoter region of target genes. May act as repressor and down-regulate enhancer-dependent gene expressison. May positively regulate chondrocyte-specific transcription such as of COL2A1 in collaboration with SOX9 and positively regulate histone H3 acetylation at chondrocyte-specific genes. May stimulate early-stage chondrocyte differentiation and inhibit later stage differention. Can repress ESR1-mediated transcriptional activation; proposed to act as corepressor for selective nuclear hormone receptors. As an RNA-binding protein, involved in the regulation of inflammatory response by stabilizing selective inflammation-related mRNAs, such as STAT3 and TBX21. Also stabilizes IL6 mRNA. Binds to stem loop structures located in the 3'UTRs of IL6, STAT3 and TBX21 mRNAs; at least for STAT3 prevents binding of ZC3H12A to the mRNA stem loop structure thus inhibiting its degradation activity. Contributes to elevated IL6 levels possibly implicated in autoimmunity processes. IL6-dependent stabilization of STAT3 mRNA may promote differentiation of naive CD4+ T-cells into T-helper Th17 cells. In CD4+ T-cells may also inhibit RORC-induced Th17 cell differentiation independently of IL6 signaling. Stabilization of TBX21 mRNA contributes to elevated interferon-gamma secretion in Th1 cells possibly implicated in the establishment of septic shock. Stabilizes TNFRSF4/OX40 mRNA by binding to the conserved stem loop structure in its 3'UTR; thereby competing with the mRNA-destabilizing functions of RC3H1 and endoribonuclease ZC3H12A. The polypeptide is AT-rich interactive domain-containing protein 5A (ARID5A) (Bos taurus (Bovine)).